The sequence spans 242 residues: Protein HTATIP2 (242 aa).

Ala-2 bears the N-acetylalanine mark. The required for interaction with elongation factor EEF1A1 stretch occupies residues 2-25 (AETEALSKLREDFRMQNKSVFILG). 11 residues coordinate NADPH: Ser-27, Gly-28, Glu-29, Thr-30, Arg-52, Arg-53, Leu-92, Gly-93, Tyr-143, Lys-147, and Arg-178. Tyr-143 acts as the Proton acceptor in catalysis. The active site involves Lys-147.

Monomer. Forms homodimers during oxidative stress. Interacts (via N-terminus) with elongation factor EEF1A1 (via middle-region); the interaction is direct and competes with EEF1A1 binding to guanyl-nucleotide exchange factor EEF1B2, thereby inhibiting GDP for GTP exchange and reactivation of EEF1A1. Interacts with nuclear transport receptors XPO4, IPO5/RANBP5, IPO7, IPO9 and KPNB1 as well as GCN1L1/GCN1 and LRPPRC probably through their HEAT repeats. Binds NCOA5/CIA.

It is found in the cytoplasm. Its function is as follows. Represses translation by preventing reactivation of elongation factor eEF1A. May also inhibit nuclear import by competing with nuclear import substrates for binding to a subset of nuclear transport receptors. Has additionally been proposed to act as a redox sensor involved in cellular oxidative stress surveillance. In Pan paniscus (Pygmy chimpanzee), this protein is Protein HTATIP2 (HTATIP2).